The chain runs to 238 residues: 2-C-methyl-D-erythritol 4-phosphate cytidylyltransferase (238 aa).

It belongs to the IspD/TarI cytidylyltransferase family. IspD subfamily.

It carries out the reaction 2-C-methyl-D-erythritol 4-phosphate + CTP + H(+) = 4-CDP-2-C-methyl-D-erythritol + diphosphate. It participates in isoprenoid biosynthesis; isopentenyl diphosphate biosynthesis via DXP pathway; isopentenyl diphosphate from 1-deoxy-D-xylulose 5-phosphate: step 2/6. In terms of biological role, catalyzes the formation of 4-diphosphocytidyl-2-C-methyl-D-erythritol from CTP and 2-C-methyl-D-erythritol 4-phosphate (MEP). The chain is 2-C-methyl-D-erythritol 4-phosphate cytidylyltransferase from Aliivibrio fischeri (strain ATCC 700601 / ES114) (Vibrio fischeri).